The primary structure comprises 261 residues: uncharacterized protein (261 aa).

Residues 1–22 (MRDSKRVVLYISIMVLSIFIIG) form the signal peptide. The N-palmitoyl cysteine moiety is linked to residue cysteine 23. Residue cysteine 23 is the site of S-diacylglycerol cysteine attachment.

This sequence belongs to the staphylococcal tandem lipoprotein family.

The protein resides in the cell membrane. This is an uncharacterized protein from Staphylococcus aureus (strain N315).